The following is a 526-amino-acid chain: Amino acid transporter heavy chain SLC3A2 (526 aa).

The interval 1-31 (MSQDTEVDMKDVELNELEPEKQPMNAADGAA) is disordered. At 1 to 75 (MSQDTEVDMK…AGSPGWVRTR (75 aa)) the chain is on the cytoplasmic side. At Ser2 the chain carries Phosphoserine. Thr5 carries the phosphothreonine modification. The span at 7 to 21 (VDMKDVELNELEPEK) shows a compositional bias: basic and acidic residues. Lys42 participates in a covalent cross-link: Glycyl lysine isopeptide (Lys-Gly) (interchain with G-Cter in ubiquitin). At Ser58 the chain carries Phosphoserine. Lys59 is covalently cross-linked (Glycyl lysine isopeptide (Lys-Gly) (interchain with G-Cter in SUMO2)). A helical; Signal-anchor for type II membrane protein transmembrane segment spans residues 76-99 (WALLLLFWLGWLGMLAGAVVIIVR). At 100 to 526 (APRCRELPVQ…GLLLQFPFVA (427 aa)) the chain is on the extracellular side. 3 N-linked (GlcNAc...) asparagine glycosylation sites follow: Asn166, Asn259, and Asn263. Ser300 is subject to Phosphoserine. N-linked (GlcNAc...) asparagine glycosylation is present at Asn301. Residue Ser302 is modified to Phosphoserine. 3 N-linked (GlcNAc...) asparagine glycosylation sites follow: Asn318, Asn385, and Asn399. Ser420 carries the phosphoserine modification. Asn509 is a glycosylation site (N-linked (GlcNAc...) asparagine).

The protein belongs to the SLC3A transporter family. Disulfide-linked heterodimer with a non-glycosylated light chain (SLC7A5, SLC7A6, SLC7A7, SLC7A8, SLC7A10 or SLC7A11). Interacts with TLCD3A/CT120 and ICAM1. Constitutively and specifically associates with beta-1 integrins (alpha-2/beta-1, alpha-3/beta-1, alpha-5/beta-1 and alpha-6/beta-1), but minimally with alpha-4/beta-1. Interacts with LAPTM4B; recruits SLC3A2 and SLC7A5 to lysosomes to promote leucine uptake into these organelles and is required for mTORC1 activation. In terms of processing, phosphorylation on Ser-300 or Ser-302 and on Ser-420 by ecto-protein kinases favors heterotypic cell-cell interactions. Post-translationally, N-glycosylated; N-glycosylation is crucial for trafficking and stability of SLC3A2 to the plasma membrane. In terms of tissue distribution, detected on the surface of embryonic epithelial cells in the epidermis, thymus, kidney, intestine, brain choroid plexus, and in retina. Detected in adult and embryonic brain, spleen, kidney, intestine and liver, and in adult testis (at protein level). Observed in all adult tissues tested with strongest expression in kidney, small intestine, spleen, thymus and liver. Moderate expression in brain, stomach, heart, testis, lung, skin, pancreas and skeletal muscle. In brain expressed on capillary endothelia in cerebral cortex.

Its subcellular location is the apical cell membrane. The protein localises to the cell membrane. It is found in the cell junction. The protein resides in the lysosome membrane. It localises to the melanosome. Its subcellular location is the basolateral cell membrane. Its function is as follows. Acts as a chaperone that facilitates biogenesis and trafficking of functional transporters heterodimers to the plasma membrane. Forms heterodimer with SLC7 family transporters (SLC7A5, SLC7A6, SLC7A7, SLC7A8, SLC7A10 and SLC7A11), a group of amino-acid antiporters. Heterodimers function as amino acids exchangers, the specificity of the substrate depending on the SLC7A subunit. Heterodimers SLC3A2/SLC7A6 or SLC3A2/SLC7A7 mediate the uptake of dibasic amino acids. Heterodimer SLC3A2/SLC7A11 functions as an antiporter by mediating the exchange of extracellular anionic L-cystine and intracellular L-glutamate across the cellular plasma membrane. SLC3A2/SLC7A10 translocates small neutral L- and D-amino acids across the plasma membrane. SLC3A2/SLC75 or SLC3A2/SLC7A8 translocates neutral amino acids with broad specificity, thyroid hormones and L-DOPA. SLC3A2 is essential for plasma membrane localization, stability, and the transport activity of SLC7A5 and SLC7A8. When associated with LAPTM4B, the heterodimer SLC7A5 is recruited to lysosomes to promote leucine uptake into these organelles, and thereby mediates mTORC1 activation. Modulates integrin-related signaling and is essential for integrin-dependent cell spreading, migration and tumor progression. The chain is Amino acid transporter heavy chain SLC3A2 from Mus musculus (Mouse).